Reading from the N-terminus, the 594-residue chain is KIF-binding protein (594 aa).

This sequence belongs to the KIF-binding protein family.

The protein resides in the cytoplasm. It localises to the cytoskeleton. Its function is as follows. Activator of KIF1B plus-end-directed microtubule motor activity. Required for organization of axonal microtubules, and axonal outgrowth and maintenance during peripheral and central nervous system development. The sequence is that of KIF-binding protein (Kifbp) from Gallus gallus (Chicken).